A 292-amino-acid polypeptide reads, in one-letter code: tRNA pseudouridine synthase B (292 aa).

Aspartate 40 functions as the Nucleophile in the catalytic mechanism.

This sequence belongs to the pseudouridine synthase TruB family. Type 1 subfamily.

The catalysed reaction is uridine(55) in tRNA = pseudouridine(55) in tRNA. Functionally, responsible for synthesis of pseudouridine from uracil-55 in the psi GC loop of transfer RNAs. The protein is tRNA pseudouridine synthase B of Mycoplasma mycoides subsp. mycoides SC (strain CCUG 32753 / NCTC 10114 / PG1).